A 95-amino-acid polypeptide reads, in one-letter code: MAPQTFALWLLLVGTLLGQGCCQHWSYGLSPGGKRELDGLSETLGNQIVGGFPHVETPCRVLGCAVESPFPKIYRMKGFLDAVTDRENGPRTYKK.

An N-terminal signal peptide occupies residues 1 to 22; sequence MAPQTFALWLLLVGTLLGQGCC. Position 23 is a pyrrolidone carboxylic acid (glutamine 23). Residue glycine 32 is modified to Glycine amide.

Belongs to the GnRH family.

It is found in the secreted. Functionally, stimulates the secretion of gonadotropins. The chain is Progonadoliberin-1 (gnrh1) from Morone saxatilis (Striped bass).